A 101-amino-acid chain; its full sequence is Iron-sulfur cluster assembly protein CyaY (101 aa).

This sequence belongs to the frataxin family.

Functionally, involved in iron-sulfur (Fe-S) cluster assembly. May act as a regulator of Fe-S biogenesis. The sequence is that of Iron-sulfur cluster assembly protein CyaY from Actinobacillus pleuropneumoniae serotype 7 (strain AP76).